We begin with the raw amino-acid sequence, 599 residues long: Elongation factor 4 (599 aa).

The tr-type G domain maps to 4-185 (KNIRNFSIIA…VIIKKVPSPK (182 aa)). GTP contacts are provided by residues 16–21 (DHGKST) and 132–135 (NKVD).

Belongs to the TRAFAC class translation factor GTPase superfamily. Classic translation factor GTPase family. LepA subfamily.

Its subcellular location is the cell membrane. It carries out the reaction GTP + H2O = GDP + phosphate + H(+). In terms of biological role, required for accurate and efficient protein synthesis under certain stress conditions. May act as a fidelity factor of the translation reaction, by catalyzing a one-codon backward translocation of tRNAs on improperly translocated ribosomes. Back-translocation proceeds from a post-translocation (POST) complex to a pre-translocation (PRE) complex, thus giving elongation factor G a second chance to translocate the tRNAs correctly. Binds to ribosomes in a GTP-dependent manner. The protein is Elongation factor 4 of Mycoplasmoides gallisepticum (strain R(low / passage 15 / clone 2)) (Mycoplasma gallisepticum).